A 350-amino-acid polypeptide reads, in one-letter code: Probable peptidyl-alpha-hydroxyglycine alpha-amidating lyase pgal-1 (350 aa).

Positions 1-19 are cleaved as a signal peptide; the sequence is MRASTACLVALLAPFYISA. The NHL 1 repeat unit spans residues 46-90; that stretch reads DRELIGLFNPSKEIGQVSGLAVNKNGHIVAFHRSGRVWDEKSFND. The N-linked (GlcNAc...) asparagine glycan is linked to Asn-103. NHL repeat units lie at residues 113–154, 162–206, and 212–256; these read KKVI…IDAK, LGEK…FDAK, and QINA…FSAG. 2 cysteine pairs are disulfide-bonded: Cys-176–Cys-196 and Cys-241–Cys-252.

Belongs to the peptidyl-alpha-hydroxyglycine alpha-amidating lyase family. Zn(2+) is required as a cofactor.

Its subcellular location is the secreted. The enzyme catalyses a [peptide]-C-terminal (2S)-2-hydroxyglycine = a [peptide]-C-terminal amide + glyoxylate. Its function is as follows. Probable lyase that catalyzes an essential reaction in C-terminal alpha-amidation of peptides. Mediates the dismutation of the unstable peptidyl(2-hydroxyglycine) intermediate to glyoxylate and the corresponding desglycine peptide amide. C-terminal amidation of peptides such as neuropeptides is essential for full biological activity. The polypeptide is Probable peptidyl-alpha-hydroxyglycine alpha-amidating lyase pgal-1 (Caenorhabditis elegans).